A 293-amino-acid chain; its full sequence is Fructose-bisphosphate aldolase class 1 (293 aa).

The active-site Proton acceptor is the glutamate 176. Lysine 211 functions as the Schiff-base intermediate with dihydroxyacetone-P in the catalytic mechanism.

Belongs to the class I fructose-bisphosphate aldolase family.

The enzyme catalyses beta-D-fructose 1,6-bisphosphate = D-glyceraldehyde 3-phosphate + dihydroxyacetone phosphate. It functions in the pathway carbohydrate degradation; glycolysis; D-glyceraldehyde 3-phosphate and glycerone phosphate from D-glucose: step 4/4. The chain is Fructose-bisphosphate aldolase class 1 from Porphyromonas gingivalis (strain ATCC 33277 / DSM 20709 / CIP 103683 / JCM 12257 / NCTC 11834 / 2561).